Here is a 78-residue protein sequence, read N- to C-terminus: MARRCGLCGKGTISGCAVSKSMHHCKRVWKPNLLAVRVVVDGSALNMRICARCLRSNPLMKKAQPRANAPLRAAAPKL.

The protein belongs to the bacterial ribosomal protein bL28 family.

This chain is Large ribosomal subunit protein bL28 (rpmB), found in Treponema pallidum (strain Nichols).